We begin with the raw amino-acid sequence, 472 residues long: Aspartyl/glutamyl-tRNA(Asn/Gln) amidotransferase subunit B (472 aa).

This sequence belongs to the GatB/GatE family. GatB subfamily. Heterotrimer of A, B and C subunits.

It catalyses the reaction L-glutamyl-tRNA(Gln) + L-glutamine + ATP + H2O = L-glutaminyl-tRNA(Gln) + L-glutamate + ADP + phosphate + H(+). The catalysed reaction is L-aspartyl-tRNA(Asn) + L-glutamine + ATP + H2O = L-asparaginyl-tRNA(Asn) + L-glutamate + ADP + phosphate + 2 H(+). Its function is as follows. Allows the formation of correctly charged Asn-tRNA(Asn) or Gln-tRNA(Gln) through the transamidation of misacylated Asp-tRNA(Asn) or Glu-tRNA(Gln) in organisms which lack either or both of asparaginyl-tRNA or glutaminyl-tRNA synthetases. The reaction takes place in the presence of glutamine and ATP through an activated phospho-Asp-tRNA(Asn) or phospho-Glu-tRNA(Gln). This chain is Aspartyl/glutamyl-tRNA(Asn/Gln) amidotransferase subunit B, found in Campylobacter jejuni subsp. jejuni serotype O:2 (strain ATCC 700819 / NCTC 11168).